The following is a 329-amino-acid chain: Ketol-acid reductoisomerase (NADP(+)) (329 aa).

A KARI N-terminal Rossmann domain is found at 2–182; it reads TQLFYDTDAD…GGTRAGILET (181 aa). Residues 25–28, S51, S53, and 83–86 contribute to the NADP(+) site; these read YGSQ and DEFQ. The active site involves H108. G134 serves as a coordination point for NADP(+). In terms of domain architecture, KARI C-terminal knotted spans 183–328; sequence NFKEETETDL…KSLRSMFSWL (146 aa). Residues D191, E195, E227, and E231 each contribute to the Mg(2+) site. S252 serves as a coordination point for substrate.

Belongs to the ketol-acid reductoisomerase family. Mg(2+) is required as a cofactor.

The catalysed reaction is (2R)-2,3-dihydroxy-3-methylbutanoate + NADP(+) = (2S)-2-acetolactate + NADPH + H(+). It carries out the reaction (2R,3R)-2,3-dihydroxy-3-methylpentanoate + NADP(+) = (S)-2-ethyl-2-hydroxy-3-oxobutanoate + NADPH + H(+). Its pathway is amino-acid biosynthesis; L-isoleucine biosynthesis; L-isoleucine from 2-oxobutanoate: step 2/4. The protein operates within amino-acid biosynthesis; L-valine biosynthesis; L-valine from pyruvate: step 2/4. Involved in the biosynthesis of branched-chain amino acids (BCAA). Catalyzes an alkyl-migration followed by a ketol-acid reduction of (S)-2-acetolactate (S2AL) to yield (R)-2,3-dihydroxy-isovalerate. In the isomerase reaction, S2AL is rearranged via a Mg-dependent methyl migration to produce 3-hydroxy-3-methyl-2-ketobutyrate (HMKB). In the reductase reaction, this 2-ketoacid undergoes a metal-dependent reduction by NADPH to yield (R)-2,3-dihydroxy-isovalerate. The sequence is that of Ketol-acid reductoisomerase (NADP(+)) from Prochlorococcus marinus (strain MIT 9301).